The primary structure comprises 193 residues: NADH-quinone oxidoreductase subunit B (193 aa).

[4Fe-4S] cluster-binding residues include C72, C73, C137, and C167.

The protein belongs to the complex I 20 kDa subunit family. In terms of assembly, NDH-1 is composed of 14 different subunits. Subunits NuoB, C, D, E, F, and G constitute the peripheral sector of the complex. It depends on [4Fe-4S] cluster as a cofactor.

It localises to the cell inner membrane. It carries out the reaction a quinone + NADH + 5 H(+)(in) = a quinol + NAD(+) + 4 H(+)(out). Functionally, NDH-1 shuttles electrons from NADH, via FMN and iron-sulfur (Fe-S) centers, to quinones in the respiratory chain. The immediate electron acceptor for the enzyme in this species is believed to be ubiquinone. Couples the redox reaction to proton translocation (for every two electrons transferred, four hydrogen ions are translocated across the cytoplasmic membrane), and thus conserves the redox energy in a proton gradient. This chain is NADH-quinone oxidoreductase subunit B, found in Phenylobacterium zucineum (strain HLK1).